The chain runs to 186 residues: Ribosome-recycling factor (186 aa).

It belongs to the RRF family.

The protein resides in the cytoplasm. Responsible for the release of ribosomes from messenger RNA at the termination of protein biosynthesis. May increase the efficiency of translation by recycling ribosomes from one round of translation to another. This chain is Ribosome-recycling factor, found in Amoebophilus asiaticus (strain 5a2).